The primary structure comprises 371 residues: Cytoplasmic dynein intermediate light chain DYN3 (371 aa).

The protein belongs to the dynein light intermediate chain DYN3 family. As to quaternary structure, the cytoplasmic dynein is composed of at least two heavy chains and a number of intermediate and light chains.

The protein resides in the cytoplasm. It localises to the cytoskeleton. Functionally, component of the cytoplasmic dynein which acts as a motor for the intracellular retrograde motility of vesicles and organelles along microtubules. May play an important role in the proper orientation of the mitotic spindle into the budding daughter cell yeast. Probably required for normal progression of the cell cycle. This Eremothecium gossypii (strain ATCC 10895 / CBS 109.51 / FGSC 9923 / NRRL Y-1056) (Yeast) protein is Cytoplasmic dynein intermediate light chain DYN3 (DYN3).